A 376-amino-acid chain; its full sequence is NADPH oxidase organizer 1 (376 aa).

The 131-residue stretch at 1–131 folds into the PX domain; sequence MAGPRYPVSV…GFFAPQPLDL (131 aa). 2 consecutive SH3 domains span residues 163–225 and 237–296; these read LEAQ…EAAP and SSGP…PEGL. The segment at 302–376 is disordered; that stretch reads GTGFRGGDDP…DSVPHPTTEQ (75 aa). A compositionally biased stretch (pro residues) spans 326-335; that stretch reads APPPTVPTRP. A proline-rich region; mediates mutually exclusive interactions with itself and NOXA1 region spans residues 328–337; that stretch reads PPTVPTRPSP.

In terms of assembly, interacts with NOX1, NOXA1, CYBA/p22phox and NCF2/p67phox. Interacts with SH3PXD2A and SH3PXD2B. In terms of tissue distribution, expressed in testis, small and large intestines, liver, kidney and pancreas. Isoform 3 is mainly expressed in colon. Isoform 1 is preferentially expressed in testis.

The protein localises to the cell membrane. Its function is as follows. Constitutively potentiates the superoxide-generating activity of NOX1 and NOX3 and is required for the biogenesis of otoconia/otolith, which are crystalline structures of the inner ear involved in the perception of gravity. Isoform 3 is more potent than isoform 1 in activating NOX3. Together with NOXA1, may also substitute to NCF1/p47phox and NCF2/p67phox in supporting the phagocyte NOX2/gp91phox superoxide-generating activity. The chain is NADPH oxidase organizer 1 (NOXO1) from Homo sapiens (Human).